Consider the following 243-residue polypeptide: Lectin-4 (243 aa).

The residue at position 1 (Gln-1) is a Pyrrolidone carboxylic acid. A glycan (N-linked (GlcNAc...) asparagine; in alpha chain) is linked at Asn-5. The N-linked (GlcNAc...) asparagine glycan is linked to Asn-18. Mn(2+) contacts are provided by Glu-129 and Asp-131. Ca(2+) contacts are provided by Asp-131, Trp-133, Asn-135, and Asp-140. Positions 140 and 145 each coordinate Mn(2+).

Belongs to the leguminous lectin family. As to quaternary structure, homodimer of Alpha and Beta forms. Post-translationally, N-glycosylation of Asn-5 converts form Beta to form Alpha.

Functionally, lectin which has a strong affinity for both the Lewis b and y human blood-group determinants. The chain is Lectin-4 from Griffonia simplicifolia (Bandeiraea simplicifolia).